The chain runs to 152 residues: Transcriptional repressor NrdR (152 aa).

A zinc finger lies at 3–34 (CPFCNHGELKVIDSRNAPEANAIKRRRECLNC). An ATP-cone domain is found at 48 to 138 (LQVLKRDGRY…VYRRFKDVGE (91 aa)).

Belongs to the NrdR family. Zn(2+) is required as a cofactor.

Its function is as follows. Negatively regulates transcription of bacterial ribonucleotide reductase nrd genes and operons by binding to NrdR-boxes. This chain is Transcriptional repressor NrdR, found in Chlamydia abortus (strain DSM 27085 / S26/3) (Chlamydophila abortus).